The following is a 273-amino-acid chain: Eukaryotic translation initiation factor 3 subunit G-2 (273 aa).

Residues 193 to 271 (SAVRISNLSE…LILCVEWSKP (79 aa)) enclose the RRM domain.

The protein belongs to the eIF-3 subunit G family. As to quaternary structure, component of the eukaryotic translation initiation factor 3 (eIF-3) complex. The eIF-3 complex interacts with pix.

It localises to the cytoplasm. Functionally, RNA-binding component of the eukaryotic translation initiation factor 3 (eIF-3) complex, which is involved in protein synthesis of a specialized repertoire of mRNAs and, together with other initiation factors, stimulates binding of mRNA and methionyl-tRNAi to the 40S ribosome. The eIF-3 complex specifically targets and initiates translation of a subset of mRNAs involved in cell proliferation. This subunit can bind 18S rRNA. This Drosophila melanogaster (Fruit fly) protein is Eukaryotic translation initiation factor 3 subunit G-2.